A 212-amino-acid polypeptide reads, in one-letter code: Claudin-7-A (212 aa).

Residues 1–7 (MANSGVQ) lie on the Cytoplasmic side of the membrane. The chain crosses the membrane as a helical span at residues 8 to 28 (LLGFGLSLIGIIGLIVGTILP). Residues 29–81 (QWKMSAYVGDSIITAVATYQGLWMSCAFQSTGQLQCKIYDSILQLDSDLQATR) lie on the Extracellular side of the membrane. The helical transmembrane segment at 82 to 102 (ALMIVGIIVSIAGLGVASIGM) threads the bilayer. Over 103–119 (KCTTCGADDKVRKTRTA) the chain is Cytoplasmic. Residues 120 to 140 (MTGGIILLVGALCAVVACSWF) traverse the membrane as a helical segment. At 141–162 (AHNVIRAFYNPFTPVNTKFEFG) the chain is on the extracellular side. Residues 163–183 (AAIFIAWGGSFLDVLGGAMLA) form a helical membrane-spanning segment. Topologically, residues 184–212 (ASCPRSKQVSKYPKSNSTRSANGSNKEYV) are cytoplasmic. The tract at residues 191-212 (QVSKYPKSNSTRSANGSNKEYV) is disordered.

It belongs to the claudin family.

The protein resides in the cell junction. It localises to the tight junction. Its subcellular location is the cell membrane. Plays a major role in tight junction-specific obliteration of the intercellular space. In Danio rerio (Zebrafish), this protein is Claudin-7-A.